The following is a 147-amino-acid chain: Ubiquitin-like-conjugating enzyme ATG10 (147 aa).

Residue Cys-116 is the Glycyl thioester intermediate of the active site.

Belongs to the ATG10 family. In terms of assembly, forms homooligomers. Interacts with ATG10. Interacts with ATG7 and ATG12.

It localises to the preautophagosomal structure membrane. Its function is as follows. E2-like enzyme required for the cytoplasm to vacuole transport (Cvt), autophagy and nucleophagy. Acts as an E2-like enzyme that catalyzes the conjugation of ATG12 to ATG5. ATG12 conjugation to ATG5 is required for proper localization of ATG8 to the preautophagosomal structure (PAS). Likely serves as an ATG5-recognition molecule. The sequence is that of Ubiquitin-like-conjugating enzyme ATG10 from Kluyveromyces marxianus (strain DMKU3-1042 / BCC 29191 / NBRC 104275) (Yeast).